Reading from the N-terminus, the 334-residue chain is Protein RecA (334 aa).

Residue 65 to 72 (GNESSGKT) participates in ATP binding.

The protein belongs to the RecA family.

It is found in the cytoplasm. Can catalyze the hydrolysis of ATP in the presence of single-stranded DNA, the ATP-dependent uptake of single-stranded DNA by duplex DNA, and the ATP-dependent hybridization of homologous single-stranded DNAs. It interacts with LexA causing its activation and leading to its autocatalytic cleavage. The protein is Protein RecA of Ureaplasma parvum serovar 3 (strain ATCC 27815 / 27 / NCTC 11736).